The chain runs to 446 residues: tRNA-2-methylthio-N(6)-dimethylallyladenosine synthase (446 aa).

Residues 3–124 (KKLYIKTYGC…LPELISKVVR (122 aa)) enclose the MTTase N-terminal domain. [4Fe-4S] cluster is bound by residues Cys12, Cys48, Cys87, Cys162, Cys166, and Cys169. One can recognise a Radical SAM core domain in the interval 148–380 (YPQGASSFIS…QKELAAQQLA (233 aa)). Residues 383–446 (ESCIGSTMKV…LNSLSGEIYR (64 aa)) form the TRAM domain.

Belongs to the methylthiotransferase family. MiaB subfamily. In terms of assembly, monomer. The cofactor is [4Fe-4S] cluster.

It localises to the cytoplasm. The enzyme catalyses N(6)-dimethylallyladenosine(37) in tRNA + (sulfur carrier)-SH + AH2 + 2 S-adenosyl-L-methionine = 2-methylsulfanyl-N(6)-dimethylallyladenosine(37) in tRNA + (sulfur carrier)-H + 5'-deoxyadenosine + L-methionine + A + S-adenosyl-L-homocysteine + 2 H(+). Its function is as follows. Catalyzes the methylthiolation of N6-(dimethylallyl)adenosine (i(6)A), leading to the formation of 2-methylthio-N6-(dimethylallyl)adenosine (ms(2)i(6)A) at position 37 in tRNAs that read codons beginning with uridine. This is tRNA-2-methylthio-N(6)-dimethylallyladenosine synthase from Rickettsia bellii (strain RML369-C).